Here is a 90-residue protein sequence, read N- to C-terminus: Probable Fe(2+)-trafficking protein (90 aa).

This sequence belongs to the Fe(2+)-trafficking protein family.

Could be a mediator in iron transactions between iron acquisition and iron-requiring processes, such as synthesis and/or repair of Fe-S clusters in biosynthetic enzymes. The chain is Probable Fe(2+)-trafficking protein from Pseudomonas putida (strain ATCC 700007 / DSM 6899 / JCM 31910 / BCRC 17059 / LMG 24140 / F1).